The sequence spans 452 residues: Protein MLF3 (452 aa).

Phosphoserine is present on residues Ser8, Ser11, Ser14, Ser56, Ser74, and Ser79. The disordered stretch occupies residues 61–94; it reads SGSEVRTPSLRKNSNNVSSPLDNVIPTSRSASNS. The segment covering 64–81 has biased composition (polar residues); it reads EVRTPSLRKNSNNVSSPL. Thr121 is modified (phosphothreonine). Residues Ser145, Ser156, and Ser160 each carry the phosphoserine modification. Phosphothreonine is present on Thr169. Ser171 carries the post-translational modification Phosphoserine. Over residues 171–182 the composition is skewed to polar residues; that stretch reads SATLPSSESSPA. Residues 171–220 form a disordered region; that stretch reads SATLPSSESSPASPDLKLSRSHSHSAATRPTLNNINNTGMTTTTSNGEPN. At Thr173 the chain carries Phosphothreonine. Residues Ser183 and Ser189 each carry the phosphoserine modification. Residues 201-216 are compositionally biased toward low complexity; that stretch reads TLNNINNTGMTTTTSN. A Phosphotyrosine modification is found at Tyr227. Ser228, Ser257, and Ser265 each carry phosphoserine. Disordered stretches follow at residues 290–321 and 348–402; these read PATS…NRSS and IESS…AIGK. Tyr295 is modified (phosphotyrosine). Ser297, Ser320, and Ser353 each carry phosphoserine. A compositionally biased stretch (low complexity) spans 299 to 321; the sequence is QQSARQYSNNANNNAKSPKNRSS. Positions 365 to 383 are enriched in low complexity; the sequence is PSFPLSSSLRSSANLASNP. Polar residues predominate over residues 384–398; that stretch reads ELATQTPLSTSSSYT. The residue at position 439 (Ser439) is a Phosphoserine.

The protein to yeast VHS2.

The protein localises to the cytoplasm. The polypeptide is Protein MLF3 (MLF3) (Saccharomyces cerevisiae (strain ATCC 204508 / S288c) (Baker's yeast)).